The chain runs to 489 residues: Long chain base biosynthesis protein 2d (489 aa).

The chain crosses the membrane as a helical span at residues 4-24 (LPYVTALTTLFSYGLLFAFGQ). K311 is modified (N6-(pyridoxal phosphate)lysine).

Belongs to the class-II pyridoxal-phosphate-dependent aminotransferase family. Heterodimer with LCB1. Component of the serine palmitoyltransferase (SPT) complex, composed of LCB1 and LCB2. It depends on pyridoxal 5'-phosphate as a cofactor.

Its subcellular location is the endoplasmic reticulum membrane. It carries out the reaction L-serine + hexadecanoyl-CoA + H(+) = 3-oxosphinganine + CO2 + CoA. It participates in lipid metabolism; sphingolipid metabolism. In terms of biological role, serine palmitoyltransferase (SPT). The heterodimer formed with LCB1 constitutes the catalytic core. The protein is Long chain base biosynthesis protein 2d of Oryza sativa subsp. japonica (Rice).